Here is a 134-residue protein sequence, read N- to C-terminus: uncharacterized protein (134 aa).

This is an uncharacterized protein from Streptomyces coelicolor (strain ATCC BAA-471 / A3(2) / M145).